Reading from the N-terminus, the 374-residue chain is Chaperone protein DnaJ (374 aa).

In terms of domain architecture, J spans 5 to 71 (DLYAILGVCR…QKRASYDRFG (67 aa)). A CR-type zinc finger spans residues 132–210 (GVEKQIRIAT…CQGTGRVKDT (79 aa)). Cysteine 145, cysteine 148, cysteine 162, cysteine 165, cysteine 184, cysteine 187, cysteine 198, and cysteine 201 together coordinate Zn(2+). CXXCXGXG motif repeat units follow at residues 145–152 (CGECHGSG), 162–169 (CPTCNGAG), 184–191 (CPTCHGRG), and 198–205 (CNKCQGTG).

Belongs to the DnaJ family. Homodimer. It depends on Zn(2+) as a cofactor.

It localises to the cytoplasm. Its function is as follows. Participates actively in the response to hyperosmotic and heat shock by preventing the aggregation of stress-denatured proteins and by disaggregating proteins, also in an autonomous, DnaK-independent fashion. Unfolded proteins bind initially to DnaJ; upon interaction with the DnaJ-bound protein, DnaK hydrolyzes its bound ATP, resulting in the formation of a stable complex. GrpE releases ADP from DnaK; ATP binding to DnaK triggers the release of the substrate protein, thus completing the reaction cycle. Several rounds of ATP-dependent interactions between DnaJ, DnaK and GrpE are required for fully efficient folding. Also involved, together with DnaK and GrpE, in the DNA replication of plasmids through activation of initiation proteins. This is Chaperone protein DnaJ from Dichelobacter nodosus (strain VCS1703A).